A 407-amino-acid chain; its full sequence is Histidine--tRNA ligase (407 aa).

This sequence belongs to the class-II aminoacyl-tRNA synthetase family. Homodimer.

Its subcellular location is the cytoplasm. The enzyme catalyses tRNA(His) + L-histidine + ATP = L-histidyl-tRNA(His) + AMP + diphosphate + H(+). This chain is Histidine--tRNA ligase, found in Wolbachia pipientis subsp. Culex pipiens (strain wPip).